The following is a 108-amino-acid chain: Cell cycle protein GpsB (108 aa).

The stretch at 32–69 (LDNVIKDYENFNAQIEALKAENEALKKAKFQARNTVSA) forms a coiled coil.

It belongs to the GpsB family. As to quaternary structure, forms polymers through the coiled coil domains. Interacts with PBP1, MreC and EzrA.

The protein localises to the cytoplasm. Functionally, divisome component that associates with the complex late in its assembly, after the Z-ring is formed, and is dependent on DivIC and PBP2B for its recruitment to the divisome. Together with EzrA, is a key component of the system that regulates PBP1 localization during cell cycle progression. Its main role could be the removal of PBP1 from the cell pole after pole maturation is completed. Also contributes to the recruitment of PBP1 to the division complex. Not essential for septum formation. The protein is Cell cycle protein GpsB of Streptococcus pyogenes serotype M28 (strain MGAS6180).